The primary structure comprises 136 residues: Protein NrdI (136 aa).

The protein belongs to the NrdI family.

Its function is as follows. Probably involved in ribonucleotide reductase function. The chain is Protein NrdI from Escherichia coli O127:H6 (strain E2348/69 / EPEC).